Consider the following 293-residue polypeptide: Aromatic amino acid exporter YddG (293 aa).

The Cytoplasmic portion of the chain corresponds to 1 to 6 (MTSQKA). A helical transmembrane segment spans residues 7–27 (TLIGLVAIVLWSTMVGLIRGV). Positions 15 to 137 (VLWSTMVGLI…IALTGVCWVL (123 aa)) constitute an EamA 1 domain. Residues 28–33 (SEGLGP) are Periplasmic-facing. The chain crosses the membrane as a helical span at residues 34–54 (VGGAAMIYSLSGLLLIFTVGL). At 55–63 (PDIRRFPGR) the chain is on the cytoplasmic side. A helical membrane pass occupies residues 64-84 (YLIAGSVLFVSYEICLALSLG). Residues 85–92 (YAATRHQA) are Periplasmic-facing. Residues 93–113 (IEVGMVNYLWPSLTILFAILF) form a helical membrane-spanning segment. Topologically, residues 114-119 (NGQKTN) are cytoplasmic. The chain crosses the membrane as a helical span at residues 120 to 140 (WLIVPGLLIALTGVCWVLGGE). Topologically, residues 141 to 147 (NGLNPGE) are periplasmic. A helical transmembrane segment spans residues 148-168 (IISNVATSPLSYLLAFLGAFI). One can recognise an EamA 2 domain in the interval 167–285 (FIWATYCTVT…AVMVCVGSLL (119 aa)). Over 169-182 (WATYCTVTNKYARG) the chain is Cytoplasmic. The chain crosses the membrane as a helical span at residues 183–203 (FNGITVFVLLTAVALWLHYFL). At 204–207 (TPQP) the chain is on the periplasmic side. The chain crosses the membrane as a helical span at residues 208–228 (AMIFSLPVIAKLFTAALTLGF). At 229-243 (AYAAWNVGILHGNVT) the chain is on the cytoplasmic side. A helical transmembrane segment spans residues 244 to 264 (IMAVGSYFTPVMSSALAALLL). Residues 265-267 (SSP) lie on the Periplasmic side of the membrane. A helical membrane pass occupies residues 268–288 (LSFSFWQGAVMVCVGSLLCWL). The Cytoplasmic segment spans residues 289–293 (ATRRR).

This sequence belongs to the drug/metabolite transporter (DMT) superfamily. Aromatic amino acid/paraquat exporter (ArAA/P-E) (TC 2.A.7.17) family.

Its subcellular location is the cell inner membrane. Functionally, amino acid transporter with broad substrate specificity. Required for resistance to methyl viologen. May function with OmpD porin. The sequence is that of Aromatic amino acid exporter YddG (yddG) from Salmonella typhimurium (strain 14028s / SGSC 2262).